A 509-amino-acid chain; its full sequence is MYPNSPSLGRIPLPLPCEQQQQASGYSDKLPVSAAPELLSPEQFIQASLNIQKHANLSRMLMNGNVLTVPPVSSPPWAYLNHSPLISPGSPSSSFQNRKRRSDEGNVSYDVKRQRFHSPQEQTVNHQAVPLRGDLRCSYPGSPAFPLLQSPSPPVLKEHVSNSGDCWLYDHIDTTLPVAEDKLSQQILDLFQALQQQVCDIKKKDICRAELQREIQQIFPQSRLYLVGSSLNGFGTRISDADLCLVLKEEPMNQHTEATQILGLLHKLFYTRLSYIERLQFIRAKVPIVKFRDKVSGAEFDLNVNNVVGIRNTFLLRTYAYLESRVRPLVLVIKKWANHHGINDASRGTLSSYTLVLMVLHYLQTLPEPILPSLQKKYPECFDLSMQLNLVHHAPRNIPPYLSKNETPLGDLLLGFLKYFAVEFDWSKDIISVREGKALPRSDDYLWRNKYICVEEPFDGTNTARAVYERQKFDMIRAEFLKAWGALRDDRDLYSLLPVTAIVKKMNSL.

Residues 88-107 (PGSPSSSFQNRKRRSDEGNV) form a disordered region. Positions 240 and 242 each coordinate Mg(2+). A PAP-associated domain is found at 409–462 (LGDLLLGFLKYFAVEFDWSKDIISVREGKALPRSDDYLWRNKYICVEEPFDGTN).

It belongs to the DNA polymerase type-B-like family. GLD2 subfamily. Component of a complex at least composed of cpeb1, cpsf1, tent2/gld2, pabpc1/ePAB, parn and sympk. Following oocyte maturation, parn is expelled from the complex. Interacts with rbfox2 and sympk. It depends on Mg(2+) as a cofactor. The cofactor is Mn(2+).

It is found in the cytoplasm. The catalysed reaction is RNA(n) + ATP = RNA(n)-3'-adenine ribonucleotide + diphosphate. In terms of biological role, cytoplasmic poly(A) RNA polymerase that adds successive AMP monomers to the 3'-end of specific RNAs, forming a poly(A) tail. In contrast to the canonical nuclear poly(A) RNA polymerase, it only adds poly(A) to selected cytoplasmic mRNAs during oocyte maturation. Plays a central role during oocyte maturation by mediating polyadenylation of dormant mRNAs, which contain 5'AAUAAA-3' sequence in their 3'UTR. In immature oocytes, polyadenylation of poly(A) tails is counteracted by the ribonuclease parn. During maturation parn is excluded from the ribonucleoprotein complex, allowing poly(A) elongation and activation of mRNAs. May not play a role in replication-dependent histone mRNA degradation. This is Poly(A) RNA polymerase GLD2-A (tent2-a) from Xenopus laevis (African clawed frog).